A 921-amino-acid polypeptide reads, in one-letter code: Isoleucine--tRNA ligase (921 aa).

The short motif at 57–67 (PYANGELHMGH) is the 'HIGH' region element. Glu-552 contributes to the L-isoleucyl-5'-AMP binding site. The 'KMSKS' region signature appears at 593–597 (KMSKS). ATP is bound at residue Lys-596. Positions 888, 891, 908, and 911 each coordinate Zn(2+).

Belongs to the class-I aminoacyl-tRNA synthetase family. IleS type 1 subfamily. As to quaternary structure, monomer. It depends on Zn(2+) as a cofactor.

Its subcellular location is the cytoplasm. The enzyme catalyses tRNA(Ile) + L-isoleucine + ATP = L-isoleucyl-tRNA(Ile) + AMP + diphosphate. Functionally, catalyzes the attachment of isoleucine to tRNA(Ile). As IleRS can inadvertently accommodate and process structurally similar amino acids such as valine, to avoid such errors it has two additional distinct tRNA(Ile)-dependent editing activities. One activity is designated as 'pretransfer' editing and involves the hydrolysis of activated Val-AMP. The other activity is designated 'posttransfer' editing and involves deacylation of mischarged Val-tRNA(Ile). The polypeptide is Isoleucine--tRNA ligase (Listeria monocytogenes serovar 1/2a (strain ATCC BAA-679 / EGD-e)).